The following is a 227-amino-acid chain: Cytochrome c oxidase subunit 2 (227 aa).

Residues 1–14 (MAYPFELGFQDATS) lie on the Mitochondrial intermembrane side of the membrane. A helical transmembrane segment spans residues 15 to 45 (PIMEELLHFHDHTLMIVFLISSLVLYIISLM). Residues 46–59 (LTTKLTHTSTMDAQ) are Mitochondrial matrix-facing. The helical transmembrane segment at 60–87 (EVETIWTILPAIILILIALPSLRILYMM) threads the bilayer. Topologically, residues 88–227 (DEINDPSLTV…HFENWSSSML (140 aa)) are mitochondrial intermembrane. The Cu cation site is built by His161, Cys196, Glu198, Cys200, His204, and Met207. Glu198 provides a ligand contact to Mg(2+).

The protein belongs to the cytochrome c oxidase subunit 2 family. As to quaternary structure, component of the cytochrome c oxidase (complex IV, CIV), a multisubunit enzyme composed of 14 subunits. The complex is composed of a catalytic core of 3 subunits MT-CO1, MT-CO2 and MT-CO3, encoded in the mitochondrial DNA, and 11 supernumerary subunits COX4I, COX5A, COX5B, COX6A, COX6B, COX6C, COX7A, COX7B, COX7C, COX8 and NDUFA4, which are encoded in the nuclear genome. The complex exists as a monomer or a dimer and forms supercomplexes (SCs) in the inner mitochondrial membrane with NADH-ubiquinone oxidoreductase (complex I, CI) and ubiquinol-cytochrome c oxidoreductase (cytochrome b-c1 complex, complex III, CIII), resulting in different assemblies (supercomplex SCI(1)III(2)IV(1) and megacomplex MCI(2)III(2)IV(2)). Found in a complex with TMEM177, COA6, COX18, COX20, SCO1 and SCO2. Interacts with TMEM177 in a COX20-dependent manner. Interacts with COX20. Interacts with COX16. Requires Cu cation as cofactor.

It is found in the mitochondrion inner membrane. The catalysed reaction is 4 Fe(II)-[cytochrome c] + O2 + 8 H(+)(in) = 4 Fe(III)-[cytochrome c] + 2 H2O + 4 H(+)(out). In terms of biological role, component of the cytochrome c oxidase, the last enzyme in the mitochondrial electron transport chain which drives oxidative phosphorylation. The respiratory chain contains 3 multisubunit complexes succinate dehydrogenase (complex II, CII), ubiquinol-cytochrome c oxidoreductase (cytochrome b-c1 complex, complex III, CIII) and cytochrome c oxidase (complex IV, CIV), that cooperate to transfer electrons derived from NADH and succinate to molecular oxygen, creating an electrochemical gradient over the inner membrane that drives transmembrane transport and the ATP synthase. Cytochrome c oxidase is the component of the respiratory chain that catalyzes the reduction of oxygen to water. Electrons originating from reduced cytochrome c in the intermembrane space (IMS) are transferred via the dinuclear copper A center (CU(A)) of subunit 2 and heme A of subunit 1 to the active site in subunit 1, a binuclear center (BNC) formed by heme A3 and copper B (CU(B)). The BNC reduces molecular oxygen to 2 water molecules using 4 electrons from cytochrome c in the IMS and 4 protons from the mitochondrial matrix. This Tamias merriami (Merriam's chipmunk) protein is Cytochrome c oxidase subunit 2 (MT-CO2).